The primary structure comprises 54 residues: Large ribosomal subunit protein bL32c (54 aa).

The segment covering 1–25 has biased composition (basic residues); sequence MAVPKKRTSKAKKNSRKANWKRKAA. A disordered region spans residues 1–26; it reads MAVPKKRTSKAKKNSRKANWKRKAAK.

Belongs to the bacterial ribosomal protein bL32 family.

Its subcellular location is the plastid. The protein resides in the chloroplast. This is Large ribosomal subunit protein bL32c from Thalassiosira pseudonana (Marine diatom).